A 148-amino-acid polypeptide reads, in one-letter code: Ribosome-binding factor A (148 aa).

Positions 120–148 are disordered; it reads AKAREGASYAGDADPYRTAEPDADDAPRA. Positions 133 to 148 are enriched in basic and acidic residues; sequence DPYRTAEPDADDAPRA.

This sequence belongs to the RbfA family. As to quaternary structure, monomer. Binds 30S ribosomal subunits, but not 50S ribosomal subunits or 70S ribosomes.

It localises to the cytoplasm. One of several proteins that assist in the late maturation steps of the functional core of the 30S ribosomal subunit. Associates with free 30S ribosomal subunits (but not with 30S subunits that are part of 70S ribosomes or polysomes). Required for efficient processing of 16S rRNA. May interact with the 5'-terminal helix region of 16S rRNA. This chain is Ribosome-binding factor A, found in Micrococcus luteus (strain ATCC 4698 / DSM 20030 / JCM 1464 / CCM 169 / CCUG 5858 / IAM 1056 / NBRC 3333 / NCIMB 9278 / NCTC 2665 / VKM Ac-2230) (Micrococcus lysodeikticus).